We begin with the raw amino-acid sequence, 247 residues long: Putative urease accessory protein UreD homolog (247 aa).

The protein belongs to the UreD family. UreD, UreF and UreG form a complex that acts as a GTP-hydrolysis-dependent molecular chaperone, activating the urease apoprotein by helping to assemble the nickel containing metallocenter of UreC. The UreE protein probably delivers the nickel.

The protein localises to the cytoplasm. Its function is as follows. Required for maturation of urease via the functional incorporation of the urease nickel metallocenter. The sequence is that of Putative urease accessory protein UreD homolog from Escherichia coli O157:H7.